A 603-amino-acid polypeptide reads, in one-letter code: Peroxisomal targeting signal receptor (603 aa).

Residue cysteine 10 forms a Glycyl cysteine thioester (Cys-Gly) (interchain with G-Cter in ubiquitin) linkage. The amphipathic helix 1 (AH1) stretch occupies residues 11–33 (SANSNAIAQFNKHTQQDRSLQRQ). Lysine 22 participates in a covalent cross-link: Glycyl lysine isopeptide (Lys-Gly) (interchain with G-Cter in ubiquitin). The disordered stretch occupies residues 23–49 (HTQQDRSLQRQAANQQGIVQNGQGFKK). Polar residues predominate over residues 31 to 45 (QRQAANQQGIVQNGQ). Positions 58 to 76 (RQNMDQFMNNGPSQSNFQF) are amphipathic helix 2 (AH2). 3 consecutive short sequence motifs (wxxxF/Y motif) follow at residues 99 to 103 (WTNEF), 128 to 132 (WATEF), and 192 to 196 (WDNQF). Residues 232-248 (FQEVWDSLNSEEVENDF) form an amphipathic helix 4 (AH4) region. The WxxxF/Y motif 4 motif lies at 271–275 (WEKDF). 5 TPR repeats span residues 304-338 (ESDPYEIGLQLMENGAKLSEAALAFEAAIQRNEGH), 339-372 (INAWLKLGEVQTQNEKEIAGISALEKCLELHPEN), 449-482 (PDVQMGLGVLFYANEDFDKTIDCFKAALSIKPDD), 484-516 (VLWNRLGASLANSNRSEEAVDAYFKALELKPTF), and 518-550 (RARYNLGVSCINIGCYKEAAEHLLSGLSMHQVE).

Belongs to the peroxisomal targeting signal receptor family. In terms of assembly, interacts (via WxxxF/Y and LVxEF motifs) with PEX14; promoting translocation through the PEX13-PEX14 docking complex. Post-translationally, monoubiquitinated at Cys-10 by PEX2 during PEX5 passage through the retrotranslocation channel: monoubiquitination acts as a signal for PEX5 extraction and is required for proper export from peroxisomes and recycling. When PEX5 recycling is compromised, polyubiquitinated at Lys-22 by PEX10 during its passage through the retrotranslocation channel, leading to its degradation.

The protein localises to the cytoplasm. It localises to the cytosol. Its subcellular location is the peroxisome matrix. Functionally, receptor that mediates peroxisomal import of proteins containing a C-terminal PTS1-type tripeptide peroxisomal targeting signal (SKL-type). Binds to cargo proteins containing a PTS1 peroxisomal targeting signal in the cytosol, and translocates them into the peroxisome matrix by passing through the PEX13-PEX14 docking complex along with cargo proteins. PEX5 receptor is then retrotranslocated into the cytosol, leading to release of bound cargo in the peroxisome matrix, and reset for a subsequent peroxisome import cycle. This Debaryomyces hansenii (strain ATCC 36239 / CBS 767 / BCRC 21394 / JCM 1990 / NBRC 0083 / IGC 2968) (Yeast) protein is Peroxisomal targeting signal receptor (PEX5).